The chain runs to 947 residues: Bifunctional glutamine synthetase adenylyltransferase/adenylyl-removing enzyme (947 aa).

The segment at 1-440 (MTPLSSPLSQ…VFNELIGDDE (440 aa)) is adenylyl removase. Residues 450 to 947 (SEPWREVWQD…ASWRKWLVAV (498 aa)) are adenylyl transferase.

It belongs to the GlnE family. Mg(2+) is required as a cofactor.

The catalysed reaction is [glutamine synthetase]-O(4)-(5'-adenylyl)-L-tyrosine + phosphate = [glutamine synthetase]-L-tyrosine + ADP. It catalyses the reaction [glutamine synthetase]-L-tyrosine + ATP = [glutamine synthetase]-O(4)-(5'-adenylyl)-L-tyrosine + diphosphate. Its function is as follows. Involved in the regulation of glutamine synthetase GlnA, a key enzyme in the process to assimilate ammonia. When cellular nitrogen levels are high, the C-terminal adenylyl transferase (AT) inactivates GlnA by covalent transfer of an adenylyl group from ATP to specific tyrosine residue of GlnA, thus reducing its activity. Conversely, when nitrogen levels are low, the N-terminal adenylyl removase (AR) activates GlnA by removing the adenylyl group by phosphorolysis, increasing its activity. The regulatory region of GlnE binds the signal transduction protein PII (GlnB) which indicates the nitrogen status of the cell. In Salmonella paratyphi B (strain ATCC BAA-1250 / SPB7), this protein is Bifunctional glutamine synthetase adenylyltransferase/adenylyl-removing enzyme.